The chain runs to 160 residues: MQPASAKWYDRRDYVFIEFCVEDSKDVNVNFEKSKLTFSCLGGSDNFKHLNEIDLFHCIDPNDSKHKRTDRSILCCLRKGESGQSWPRLTKERAKLNWLSVDFNNWKDWEDDSDEDMSNFDRFSEMMNNMGGDEDVDLPEVDGADDDSQDSDDEKMPDLE.

Positions 1-90 constitute a CS domain; that stretch reads MQPASAKWYD…ESGQSWPRLT (90 aa). The residue at position 33 (Lys33) is an N6-acetyllysine. Lys35 participates in a covalent cross-link: Glycyl lysine isopeptide (Lys-Gly) (interchain with G-Cter in SUMO2). Ser44 carries the post-translational modification Phosphoserine. A Glycyl lysine isopeptide (Lys-Gly) (interchain with G-Cter in SUMO2) cross-link involves residue Lys65. Ser85, Ser100, Ser113, Ser118, Ser148, and Ser151 each carry phosphoserine. Positions 124–160 are disordered; sequence SEMMNNMGGDEDVDLPEVDGADDDSQDSDDEKMPDLE. Positions 132–153 are enriched in acidic residues; the sequence is GDEDVDLPEVDGADDDSQDSDD. Residues 157–160 carry the PXLE motif motif; the sequence is PDLE.

The protein belongs to the p23/wos2 family. In terms of assembly, probably forms a complex composed of chaperones HSP90 and HSP70, co-chaperones STIP1/HOP, CDC37, PPP5C, PTGES3/p23, TSC1 and client protein TSC2. Binds to the progesterone receptor. Interacts with TERT; the interaction, together with HSP90AA1, is required for correct assembly and stabilization of the telomerase holoenzyme complex. Interacts (via PXLE motif) with EGLN1/PHD2, recruiting EGLN1/PHD2 to the HSP90 pathway to facilitate HIF alpha proteins hydroxylation. Interacts with HSP90AA1, FLCN, FNIP1 and FNIP2. Post-translationally, proteolytically cleaved by caspase-7 (CASP7) in response to apoptosis, leading to its inactivation. As to expression, detected in testis and ovary, at lower levels in endometrium, myometrium, kidney and lung, and only faintly in spleen, heart and muscle (at protein level). Expressed at high levels in glandular and luminal epithelial cells of the endometrium, but also detected in stromal cells (at protein level).

It localises to the cytoplasm. The enzyme catalyses prostaglandin H2 = prostaglandin E2. The protein operates within lipid metabolism; prostaglandin biosynthesis. In terms of biological role, cytosolic prostaglandin synthase that catalyzes the oxidoreduction of prostaglandin endoperoxide H2 (PGH2) to prostaglandin E2 (PGE2). Molecular chaperone that localizes to genomic response elements in a hormone-dependent manner and disrupts receptor-mediated transcriptional activation, by promoting disassembly of transcriptional regulatory complexes. Facilitates HIF alpha proteins hydroxylation via interaction with EGLN1/PHD2, leading to recruit EGLN1/PHD2 to the HSP90 pathway. The chain is Prostaglandin E synthase 3 (PTGES3) from Bos taurus (Bovine).